The sequence spans 200 residues: Holliday junction branch migration complex subunit RuvA (200 aa).

The tract at residues 1–63 (MIAFVRGQVA…EDSLTLFGFA (63 aa)) is domain I. Positions 64 to 142 (DEDEKQTFEL…APTGAGRSAG (79 aa)) are domain II. A flexible linker region spans residues 142–146 (GVPAP). The domain III stretch occupies residues 147-200 (AGAVWRDQVHQGLVGLGWPVRDAEKAVAAVAPEAGDVPDVAALLRAALRTLSKA).

The protein belongs to the RuvA family. Homotetramer. Forms an RuvA(8)-RuvB(12)-Holliday junction (HJ) complex. HJ DNA is sandwiched between 2 RuvA tetramers; dsDNA enters through RuvA and exits via RuvB. An RuvB hexamer assembles on each DNA strand where it exits the tetramer. Each RuvB hexamer is contacted by two RuvA subunits (via domain III) on 2 adjacent RuvB subunits; this complex drives branch migration. In the full resolvosome a probable DNA-RuvA(4)-RuvB(12)-RuvC(2) complex forms which resolves the HJ.

The protein resides in the cytoplasm. Functionally, the RuvA-RuvB-RuvC complex processes Holliday junction (HJ) DNA during genetic recombination and DNA repair, while the RuvA-RuvB complex plays an important role in the rescue of blocked DNA replication forks via replication fork reversal (RFR). RuvA specifically binds to HJ cruciform DNA, conferring on it an open structure. The RuvB hexamer acts as an ATP-dependent pump, pulling dsDNA into and through the RuvAB complex. HJ branch migration allows RuvC to scan DNA until it finds its consensus sequence, where it cleaves and resolves the cruciform DNA. The protein is Holliday junction branch migration complex subunit RuvA of Nocardioides sp. (strain ATCC BAA-499 / JS614).